We begin with the raw amino-acid sequence, 295 residues long: GTPase Era (295 aa).

The 168-residue stretch at 3-170 folds into the Era-type G domain; it reads KSGFVTIVGR…VDLMKTELPE (168 aa). The interval 11–18 is G1; that stretch reads GRPNVGKS. Residue 11 to 18 participates in GTP binding; sequence GRPNVGKS. The segment at 37-41 is G2; it reads QTTRN. The G3 stretch occupies residues 58–61; the sequence is DTPG. GTP is bound by residues 58 to 62 and 120 to 123; these read DTPGI and NKID. Positions 120–123 are G4; that stretch reads NKID. Residues 149–151 form a G5 region; the sequence is IAA. Positions 201-278 constitute a KH type-2 domain; sequence LRDEVPHGIA…NVKIWVKVRK (78 aa).

It belongs to the TRAFAC class TrmE-Era-EngA-EngB-Septin-like GTPase superfamily. Era GTPase family. In terms of assembly, monomer.

It is found in the cytoplasm. Its subcellular location is the cell membrane. Functionally, an essential GTPase that binds both GDP and GTP, with rapid nucleotide exchange. Plays a role in 16S rRNA processing and 30S ribosomal subunit biogenesis and possibly also in cell cycle regulation and energy metabolism. The protein is GTPase Era of Clostridium botulinum (strain Alaska E43 / Type E3).